We begin with the raw amino-acid sequence, 287 residues long: Very long chain fatty acid elongase 4 (287 aa).

3 helical membrane passes run 33–53, 64–84, and 115–135; these read ILVY…EHIM, PFVV…YSCV, and FWVF…VFLV. A HxxHH motif motif is present at residues 145–149; that stretch reads HWYHH. The Nucleophile role is filled by His-148. 4 helical membrane passes run 150–170, 172–192, 199–219, and 241–261; these read LTVA…GLWF, TMNY…ACGM, IAPF…LIVL, and LGLV…GKLY.

This sequence belongs to the ELO family.

The protein resides in the membrane. The enzyme catalyses a very-long-chain acyl-CoA + malonyl-CoA + H(+) = a very-long-chain 3-oxoacyl-CoA + CO2 + CoA. Its function is as follows. Involved in the synthesis of fatty acids. Elongates C16:0 and C18:0 fatty acids to C26:0, with C24:0 being the main product. The polypeptide is Very long chain fatty acid elongase 4 (Trypanosoma cruzi (strain CL Brener)).